A 294-amino-acid chain; its full sequence is Probable porphobilinogen deaminase (294 aa).

Cys233 carries the post-translational modification S-(dipyrrolylmethanemethyl)cysteine.

It belongs to the HMBS family. Requires dipyrromethane as cofactor.

The catalysed reaction is 4 porphobilinogen + H2O = hydroxymethylbilane + 4 NH4(+). The protein operates within porphyrin-containing compound metabolism; protoporphyrin-IX biosynthesis; coproporphyrinogen-III from 5-aminolevulinate: step 2/4. Functionally, tetrapolymerization of the monopyrrole PBG into the hydroxymethylbilane pre-uroporphyrinogen in several discrete steps. In Sulfurisphaera tokodaii (strain DSM 16993 / JCM 10545 / NBRC 100140 / 7) (Sulfolobus tokodaii), this protein is Probable porphobilinogen deaminase.